The chain runs to 733 residues: Catalase-peroxidase (733 aa).

Residues 1–23 form the signal peptide; it reads MNNESKCPFAAAHGVRSPATARA. Residues 96 to 224 constitute a cross-link (tryptophyl-tyrosyl-methioninium (Trp-Tyr) (with M-250)); that stretch reads WHSAGTYRTA…LAAVQMGLIY (129 aa). Residue histidine 97 is the Proton acceptor of the active site. The tryptophyl-tyrosyl-methioninium (Tyr-Met) (with W-96) cross-link spans 224–250; that stretch reads YVNPEGPDGNPDPVASGRDVRETFARM. Heme b is bound at residue histidine 265.

The protein belongs to the peroxidase family. Peroxidase/catalase subfamily. In terms of assembly, homodimer or homotetramer. Heme b serves as cofactor. Post-translationally, formation of the three residue Trp-Tyr-Met cross-link is important for the catalase, but not the peroxidase activity of the enzyme.

The catalysed reaction is H2O2 + AH2 = A + 2 H2O. It carries out the reaction 2 H2O2 = O2 + 2 H2O. Bifunctional enzyme with both catalase and broad-spectrum peroxidase activity. In Azoarcus sp. (strain BH72), this protein is Catalase-peroxidase.